A 372-amino-acid polypeptide reads, in one-letter code: Caytaxin (372 aa).

Residues Met-1–Arg-58 form a disordered region. Residues Glu-11–Pro-29 show a composition bias toward basic and acidic residues. Polar residues predominate over residues Asp-43–Leu-53. Ser-54 is subject to Phosphoserine. The required for interaction with KLC1 stretch occupies residues Glu-115–Asp-120. The CRAL-TRIO domain maps to Ile-171–Leu-328. The interval Ala-190 to Ser-372 is mediates interaction with GLS. The disordered stretch occupies residues Arg-329–Ser-372. Residues Val-354–Ser-372 are compositionally biased toward acidic residues.

Interacts with KLC1; may link mitochondria to KLC1 and regulate mitochondria localization into neuron projections. Interacts with GLS; the interaction is direct and may control GLS localization, negatively regulating its activity. Interacts with PIN1 (via WW domain); upon NGF stimulation. The interaction with PIN1 and GLS is competitive. In terms of processing, cleaved by CASP3 and CASP7. The potential C-terminal product released by CASP3 cleavage may inhibit the ERK signaling pathway through MAP2K2. Post-translationally, may be ubiquitinated by STUB1. Neuronal tissues specific. Strongly expressed in brain. Expressed in virtually all parts of the adult brain, including cortex, cerebellum and olfactory bulbs. Enriched in hippocampus, cerebellar cortex, deep cerebellar nuclei, and pontine nuclei (at protein level).

It localises to the cell projection. The protein localises to the axon. Its subcellular location is the dendrite. It is found in the presynapse. The protein resides in the mitochondrion. It localises to the growth cone. The protein localises to the cytoplasm. Its function is as follows. Functions in the development of neural tissues, particularly the postnatal maturation of the cerebellar cortex. May play a role in neurotransmission through regulation of glutaminase/GLS, an enzyme responsible for the production in neurons of the glutamate neurotransmitter. Alternatively, may regulate the localization of mitochondria within axons and dendrites. The protein is Caytaxin (Atcay) of Mus musculus (Mouse).